The chain runs to 116 residues: NADPH-dependent 7-cyano-7-deazaguanine reductase (116 aa).

C31 (thioimide intermediate) is an active-site residue. D38 acts as the Proton donor in catalysis. Residues 53–55 and 72–73 each bind substrate; these read IEL and YE.

It belongs to the GTP cyclohydrolase I family. QueF type 1 subfamily.

Its subcellular location is the cytoplasm. It carries out the reaction 7-aminomethyl-7-carbaguanine + 2 NADP(+) = 7-cyano-7-deazaguanine + 2 NADPH + 3 H(+). It participates in tRNA modification; tRNA-queuosine biosynthesis. Its function is as follows. Catalyzes the NADPH-dependent reduction of 7-cyano-7-deazaguanine (preQ0) to 7-aminomethyl-7-deazaguanine (preQ1). The protein is NADPH-dependent 7-cyano-7-deazaguanine reductase of Chlorobium luteolum (strain DSM 273 / BCRC 81028 / 2530) (Pelodictyon luteolum).